Consider the following 1045-residue polypeptide: FERM, ARHGEF and pleckstrin domain-containing protein 1 (1045 aa).

The interval 1–37 is disordered; sequence MGEIEQRPTPGSRLGAPENSGISTLERGQKPPPTPSG. Phosphoserine occurs at positions 20 and 23. A Phosphothreonine modification is found at threonine 24. The FERM domain occupies 40-320; the sequence is VSIKIQMLDD…EHHAFFRLFE (281 aa). 7 positions are modified to phosphoserine: serine 340, serine 373, serine 389, serine 403, serine 418, serine 427, and serine 433. The interval 361 to 534 is disordered; the sequence is FERKHSKIHS…TDDEDEGRRK (174 aa). Residues 373–396 show a composition bias toward polar residues; that stretch reads SLASQPTELNSEVLEQSQQSTSLT. Composition is skewed to polar residues over residues 471 to 489 and 496 to 511; these read TGSLTGSPHLSELSVNSQG and VTLSPNLSPDTKQASP. Residues serine 510 and serine 514 each carry the phosphoserine modification. The region spanning 540-730 is the DH domain; it reads KAYFIAKEVS…TEMVAQLHGT (191 aa). A PH 1 domain is found at 759–856; that stretch reads EFIRLGSLSK…WVEDIQMAID (98 aa). Serine 833, serine 872, and serine 878 each carry phosphoserine. The interval 864 to 903 is disordered; sequence PAPEFLASSPPDNKSPDEATAADQESEDDLSASRTSLERQ. Threonine 883 is subject to Phosphothreonine. 3 positions are modified to phosphoserine: serine 889, serine 896, and serine 899. In terms of domain architecture, PH 2 spans 932–1029; it reads ENQLSGNLLR…WMEVIRSATS (98 aa).

Interacts with CADM1. Interacts with RAC1. In terms of tissue distribution, detected in cAMP-treated chondrocytes, but not in untreated chondrocytes. Detected in fetal brain, heart and spleen, and in adult testis, kidney and lung.

It is found in the cell membrane. The protein resides in the synapse. It localises to the synaptosome. The protein localises to the cytoplasm. Its subcellular location is the cytosol. It is found in the cell projection. The protein resides in the filopodium. It localises to the dendrite. The protein localises to the dendritic spine. Functions as a guanine nucleotide exchange factor for RAC1. May play a role in semaphorin signaling. Plays a role in the assembly and disassembly of dendritic filopodia, the formation of dendritic spines, regulation of dendrite length and ultimately the formation of synapses. The chain is FERM, ARHGEF and pleckstrin domain-containing protein 1 (FARP1) from Homo sapiens (Human).